Reading from the N-terminus, the 152-residue chain is UPF0179 protein HQ_3004A (152 aa).

It belongs to the UPF0179 family.

The polypeptide is UPF0179 protein HQ_3004A (Haloquadratum walsbyi (strain DSM 16790 / HBSQ001)).